Reading from the N-terminus, the 328-residue chain is Beta-ribofuranosylphenol 5'-phosphate synthase (328 aa).

This sequence belongs to the beta-RFA-P synthase family. In terms of assembly, homodimer. Mg(2+) serves as cofactor.

It carries out the reaction 5-phospho-alpha-D-ribose 1-diphosphate + 4-hydroxybenzoate + H(+) = 4-(beta-D-ribofuranosyl)phenol 5'-phosphate + CO2 + diphosphate. It catalyses the reaction 4-aminobenzoate + 5-phospho-alpha-D-ribose 1-diphosphate + H(+) = 4-(beta-D-ribofuranosyl)aminobenzene 5'-phosphate + CO2 + diphosphate. It participates in cofactor biosynthesis; 5,6,7,8-tetrahydromethanopterin biosynthesis. Its function is as follows. Catalyzes the condensation of 4-hydroxybenzoate (HB) with 5-phospho-alpha-D-ribose 1-diphosphate (PRPP) to produce beta-ribofuranosylphenol 5'-phosphate (beta-RFH-P). Also catalyzes the condensation of 4-aminobenzoate (pABA) with PRPP to produce beta-ribofuranosylaminobenzene 5'-phosphate (beta-RFA-P). Only 4-hydroxybenzoate is known to be biosynthesized by methanogenic archaea, but 4-aminobenzoate can be used as substrate by growing methanogens when it is present in the growth medium. The protein is Beta-ribofuranosylphenol 5'-phosphate synthase of Methanocaldococcus jannaschii (strain ATCC 43067 / DSM 2661 / JAL-1 / JCM 10045 / NBRC 100440) (Methanococcus jannaschii).